We begin with the raw amino-acid sequence, 278 residues long: MHKAGQLGLCARAWNSVRMASSGMTRRDPLANKVALVTASTDGIGFAIARRLAQDGAHVVVSSRKQQNVDQAVATLQGEGLSVTGTVCHVGKAEDRERLVATAVKLHGGIDILVSNAAVNPFFGSLMDVTEEVWDKTLDINVKAPALMTKAVVPEMEKRGGGSVVIVSSIAAFSPSPGFSPYNVSKTALLGLTKTLAIELAPRNIRVNCLAPGLIKTSFSRMLWMDKEKEESMKETLRIRRLGEPEDCAGIVSFLCSEDASYITGETVVVGGGTPSRL.

36 to 60 contacts NADP(+); that stretch reads LVTASTDGIGFAIARRLAQDGAHVV. Lysine 92 bears the N6-acetyllysine; alternate mark. An N6-succinyllysine; alternate modification is found at lysine 92. Residue lysine 105 is modified to N6-acetyllysine. Serine 169 serves as a coordination point for substrate. Tyrosine 182 serves as the catalytic Proton acceptor. NADP(+) is bound at residue lysine 186. Residue lysine 216 is modified to N6-acetyllysine; alternate. Lysine 216 bears the N6-succinyllysine; alternate mark. Position 220 is a phosphoserine (serine 220). Lysine 227 and lysine 234 each carry N6-succinyllysine. Positions 276–278 match the Peroxisomal targeting signal motif; sequence SRL.

It belongs to the short-chain dehydrogenases/reductases (SDR) family. In terms of assembly, homotetramer.

The protein resides in the peroxisome. The enzyme catalyses a secondary alcohol + NADP(+) = a ketone + NADPH + H(+). The catalysed reaction is 3beta-hydroxy-5beta-pregnane-20-one + NADP(+) = 5beta-pregnan-3,20-dione + NADPH + H(+). It catalyses the reaction 5beta-dihydrotestosterone + NADPH + H(+) = 5beta-androstane-3beta,17beta-diol + NADP(+). It carries out the reaction 5beta-androstane-3,17-dione + NADPH + H(+) = 3beta-hydroxy-5beta-androstane-17-one + NADP(+). The enzyme catalyses isatin + NADPH + H(+) = 3-hydroxyindolin-2-one + NADP(+). The catalysed reaction is lithocholate + NADP(+) = 3-oxo-5beta-cholan-24-oate + NADPH + H(+). It catalyses the reaction 3-oxo-5beta-cholan-24-oate + NADPH + H(+) = isolithocholate + NADP(+). Its function is as follows. NADPH-dependent oxidoreductase which catalyzes the reduction of a variety of compounds bearing carbonyl groups including ketosteroids, alpha-dicarbonyl compounds, aldehydes, aromatic ketones and quinones. Reduces 3-ketosteroids and benzil into 3beta-hydroxysteroids and R-benzoin, respectively, in contrast to the stereoselectivity of non-primate DHRS4s which produce 3alpha-hydroxysteroids and S-benzoin. Diplays low activity toward all-trans-retinal and no activity toward 9-cis-retinal as compared to non-primate mammals. In the reverse reaction, catalyze the NAD-dependent oxidation of 3beta-hydroxysteroids and alcohol, but with much lower efficiency. Involved in the metabolism of 3beta-hydroxysteroids, isatin and xenobiotic carbonyl compounds. This is Dehydrogenase/reductase SDR family member 4 (DHRS4) from Pongo abelii (Sumatran orangutan).